Consider the following 967-residue polypeptide: Siderophore exporter MmpL4 (967 aa).

11 helical membrane-spanning segments follow: residues 26–46 (AFAVPIILGWLAVCVVVTVFV), 210–230 (VIFIMLLLVYRSIITVVLLLI), 242–262 (VVAVLGHSGAIGLTTFAVSLL), 303–323 (AHVILGSGLTIAGATFCLSFA), 333–353 (IPCAVGMLVAVAVALTLGPAV), 384–404 (WPLPVLVATCAIALVGLLALP), 769–789 (WDLLIAAISSLCLIFIIMLII), 793–813 (FIAAAVIVGTVALSLGASFGL), 821–841 (ILAIHLHWLVLAMSVIVLLAV), 875–895 (VVTNAGLVFAVTMASMAVSDL), and 913–934 (TLIVRSFMTPSIAALLGRWFWW). A disordered region spans residues 943–967 (ARTPTVPSETQPAGRPLAMSSDRLG).

The protein belongs to the resistance-nodulation-cell division (RND) (TC 2.A.6) family. MmpL subfamily. In terms of assembly, interacts with MmpS4.

The protein resides in the cell inner membrane. Functionally, part of an export system, which is required for biosynthesis and secretion of siderophores. This Mycobacterium tuberculosis (strain CDC 1551 / Oshkosh) protein is Siderophore exporter MmpL4 (mmpL4).